The primary structure comprises 268 residues: LOB domain-containing protein 22 (268 aa).

Positions 1–31 (MPSGKPSSVFPLHPKPTPLKPSSSTSSSNNN) are disordered. A compositionally biased stretch (low complexity) spans 22–31 (SSSTSSSNNN). In terms of domain architecture, LOB spans 35–136 (QACAACKYQR…NELEIVLQQL (102 aa)).

The protein belongs to the LOB domain-containing protein family.

In Arabidopsis thaliana (Mouse-ear cress), this protein is LOB domain-containing protein 22 (LBD22).